We begin with the raw amino-acid sequence, 265 residues long: uncharacterized protein (265 aa).

The stretch at 143 to 205 forms a coiled coil; sequence ATQKALKDSI…EKLIKSVEKA (63 aa).

This is an uncharacterized protein from Aquifex aeolicus (strain VF5).